The following is a 491-amino-acid chain: Probable glycine dehydrogenase (decarboxylating) subunit 2 (491 aa).

Lys273 bears the N6-(pyridoxal phosphate)lysine mark.

Belongs to the GcvP family. C-terminal subunit subfamily. As to quaternary structure, the glycine cleavage system is composed of four proteins: P, T, L and H. In this organism, the P 'protein' is a heterodimer of two subunits. The cofactor is pyridoxal 5'-phosphate.

It catalyses the reaction N(6)-[(R)-lipoyl]-L-lysyl-[glycine-cleavage complex H protein] + glycine + H(+) = N(6)-[(R)-S(8)-aminomethyldihydrolipoyl]-L-lysyl-[glycine-cleavage complex H protein] + CO2. Functionally, the glycine cleavage system catalyzes the degradation of glycine. The P protein binds the alpha-amino group of glycine through its pyridoxal phosphate cofactor; CO(2) is released and the remaining methylamine moiety is then transferred to the lipoamide cofactor of the H protein. The sequence is that of Probable glycine dehydrogenase (decarboxylating) subunit 2 from Bacillus cereus (strain B4264).